A 467-amino-acid chain; its full sequence is Coiled-coil domain-containing protein 71 (467 aa).

The interval 81–105 (PSQTKLQARAPNPTATSPPASAPRT) is disordered. A compositionally biased stretch (low complexity) spans 88 to 105 (ARAPNPTATSPPASAPRT). At Ser-129 the chain carries Phosphoserine. 2 disordered regions span residues 211 to 280 (KLRK…GTKT) and 349 to 416 (VRAK…KAWL). Positions 253–265 (GHQSKTNRATGSP) are enriched in polar residues. Residues 279–359 (KTAQAKVART…RAKAKVARTQ (81 aa)) are a coiled coil. Over residues 349-380 (VRAKAKVARTQPRGRGRPKGSAKARTTRKGQK) the composition is skewed to basic residues. Over residues 392–401 (RAEEAKDLPP) the composition is skewed to basic and acidic residues.

This chain is Coiled-coil domain-containing protein 71 (CCDC71), found in Homo sapiens (Human).